The following is a 551-amino-acid chain: Urocanate hydratase (551 aa).

Residues 48–49, Gln-126, 172–174, Glu-192, Arg-197, 238–239, 259–263, 269–270, and Tyr-318 contribute to the NAD(+) site; these read GG, GMG, NA, QTSAH, and YI. The active site involves Cys-406. Position 488 (Gly-488) interacts with NAD(+).

This sequence belongs to the urocanase family. Requires NAD(+) as cofactor.

The protein resides in the cytoplasm. The catalysed reaction is 4-imidazolone-5-propanoate = trans-urocanate + H2O. It participates in amino-acid degradation; L-histidine degradation into L-glutamate; N-formimidoyl-L-glutamate from L-histidine: step 2/3. Catalyzes the conversion of urocanate to 4-imidazolone-5-propionate. This chain is Urocanate hydratase, found in Symbiobacterium thermophilum (strain DSM 24528 / JCM 14929 / IAM 14863 / T).